The sequence spans 673 residues: RAS guanyl-releasing protein 4 (673 aa).

Composition is skewed to basic residues over residues 1 to 10 (MNRKDIKRKS) and 20 to 32 (GRGR…RHKT). 2 disordered regions span residues 1–34 (MNRK…KTCP) and 164–188 (LGDA…PGLG). The N-terminal Ras-GEF domain maps to 49–175 (GVLSESSCSE…DASSLLSPGG (127 aa)). A compositionally biased stretch (low complexity) spans 164 to 173 (LGDASSLLSP). The region spanning 201–432 (ETEELAQHLT…YELSYAREPR (232 aa)) is the Ras-GEF domain. In terms of domain architecture, EF-hand spans 466 to 501 (HVEQLVESVFKNYDPEGRGSISLEDFERLSGNFPFA). Residues 540–590 (LHAFQEVTFRKPTFCHSCSGFLWGVTKQGYRCRDCGLCCHRHCRDQVRVEC) form a Phorbol-ester/DAG-type zinc finger. The disordered stretch occupies residues 592 to 633 (KRPETKGDPGPPGAPVPATSLPPANCGSEESLSYTLSPDPES).

The protein belongs to the RASGRP family. Expressed by mast cells and their progenitors (at protein level). Expressed by dendritic cells. As to expression, expressed in neutrophils.

It is found in the cytoplasm. Its subcellular location is the cell membrane. In terms of biological role, functions as a cation- and diacylglycerol (DAG)-regulated nucleotide exchange factor activating Ras through the exchange of bound GDP for GTP. In neutrophils, participates in a phospholipase C-activating N-formyl peptide-activated GPCR (G protein-coupled receptor) signaling pathway by promoting Ras-mediated activation of PIK3CG/PI3Kgamma to promote neutrophil functional responses. In CD117(+) dendritic cells and mast cells, participates in an lipopolysaccharide (LPS)-activated signaling pathway that stimulates the production of interferon-gamma and other pro-inflammatory cytokines by natural killer (NK) cells. May function in mast cell differentiation. Does not appear to be required for the development of B-cells, DC-cells, T-cells, or NK-cells. Binds diacylglycerol (DAG). Functionally, unable to bind diacylglycerol (DAG). This chain is RAS guanyl-releasing protein 4 (Rasgrp4), found in Mus musculus (Mouse).